A 674-amino-acid polypeptide reads, in one-letter code: MLRPWFCFRSCVSLLSNRRQYGFRYLATAEPSKSEKPAKPVKPAKPMSVQEKKMRLGQDQFRKELEERISKIPIQNYRNFSIVAHVDHGKSTLSDRLLELTGVIEPGSKSQVLDKLDVERERGITVKAQTVSMLYTEPASGQDYLLHLVDTPGHVDFRAEVSRSYASCGGALLLVDASQGVQAQTVANFFLAYSMDLKLIPIINKIDLDLANIPRAMEQVETTFELDPADCIPVSAKTGLNVEKIIPSIIKNIPAPVGDESRPLKALLVDSWHDPYVGVVMLVHVVDGKLKKGTKLLSAHTNKTYDVKEVGIMYPDRTPMEYIKAGQVAYVIPGMKNPREALVGDTFFQLGKSEGLDPLPGFEEPQPMVFVGAFPSEGKDFSIMDDSIQNLVLNDRSVHLEKETSNALGSGWRLGFLGSLHASVFKERLEKEYGAKIILTAPTVPYKIVFKNGDEKIITNPDEFPDNKMHNLVSHYMEPYVETIMTLPNEYVGTVMQLCLSNRGEQKEVEYLNTGQTLLRYDIPMAQLVEDFFGKLKGCTKGYASLDYEDAGYRKSDIVKMELCVNGEPQDALTTIVHKSIAQAKGKEYVTRFKKFLRYQLFEVAIQARVNNKVIARETIKAKRKDVTQKLHAADISRYKKLLERQKEGKKQMKAVGRINIGNDAYQAFLRRDN.

The transit peptide at 1-33 directs the protein to the mitochondrion; that stretch reads MLRPWFCFRSCVSLLSNRRQYGFRYLATAEPSK. Residues 32–51 form a disordered region; it reads SKSEKPAKPVKPAKPMSVQE. One can recognise a tr-type G domain in the interval 75–257; it reads QNYRNFSIVA…SIIKNIPAPV (183 aa). Residues 84–91, 150–154, and 204–207 contribute to the GTP site; these read AHVDHGKS, DTPGH, and NKID.

The protein belongs to the TRAFAC class translation factor GTPase superfamily. Classic translation factor GTPase family. LepA subfamily.

It is found in the mitochondrion inner membrane. It catalyses the reaction GTP + H2O = GDP + phosphate + H(+). Functionally, promotes mitochondrial protein synthesis. May act as a fidelity factor of the translation reaction, by catalyzing a one-codon backward translocation of tRNAs on improperly translocated ribosomes. Binds to mitochondrial ribosomes in a GTP-dependent manner. This Lodderomyces elongisporus (strain ATCC 11503 / CBS 2605 / JCM 1781 / NBRC 1676 / NRRL YB-4239) (Yeast) protein is Translation factor GUF1, mitochondrial.